Here is a 21-residue protein sequence, read N- to C-terminus: Protein YadW (21 aa).

The chain is Protein YadW from Escherichia coli (strain K12).